The primary structure comprises 185 residues: MIDDIRSDAQSRMKKSLEALDTAMKRVRTGRAHPSLLDNITIEYYGAETPLNQMGNISVEEGRTLTISPFDKSLIPQIERAILMSDLGLNPSTSGTLIRLPLPPLTEETRRDLVKVVRAEAEQARVSIRNIRRDANSDLKELLKEKEISEDEQRRGEEQIQQLTDKMVAEVEGVLKEKEEELMTV.

This sequence belongs to the RRF family.

It localises to the cytoplasm. Functionally, responsible for the release of ribosomes from messenger RNA at the termination of protein biosynthesis. May increase the efficiency of translation by recycling ribosomes from one round of translation to another. This is Ribosome-recycling factor from Alcanivorax borkumensis (strain ATCC 700651 / DSM 11573 / NCIMB 13689 / SK2).